Reading from the N-terminus, the 389-residue chain is Protein WALLS ARE THIN 1 (389 aa).

Transmembrane regions (helical) follow at residues 18–38 (LQLHIAMLTLQFGYAGFHVVS), 49–69 (LVFPVYRNIIALLLLLPFAYF), 76–96 (PAITLNFLIQFFFLALIGITA), 111–131 (TFASSMQNSVPAITFLMAALL), 143–163 (GISKILGTALCVAGASVITLY), 198–218 (WTLGCIYLIGHCLSWSGWLVF), 230–250 (LSVTSYTCFFGIIQFLIIAAF), 266–286 (LFTILYAGIVASGIAFAVQIW), 294–314 (VFVAVYQPVQTLVVAIMASIA), and 319–339 (FYLGGIIGAVLIIAGLYFVLY). EamA domains lie at 32–161 (AGFH…SVIT) and 210–339 (LSWS…FVLY). Ser-372 is modified (phosphoserine).

The protein belongs to the drug/metabolite transporter (DMT) superfamily. Plant drug/metabolite exporter (P-DME) (TC 2.A.7.4) family. As to expression, mostly expressed in stems and hypocotyls, also present in seedlings, root, leaves, flowers and siliques. Ubiquitous, mostly expressed in vascular tissues and secondary wall-forming cells, including developing xylem vessels and fibers.

It localises to the vacuole membrane. Required for secondary wall formation in fibers, especially in short days conditions. Promotes indole metabolism and transport (e.g. tryptophan, neoglucobrassicin and auxin (indole-3-acetic acid)). May prevent salicylic-acid (SA) accumulation. The sequence is that of Protein WALLS ARE THIN 1 (WAT1) from Arabidopsis thaliana (Mouse-ear cress).